The primary structure comprises 155 residues: Regulatory protein RecX (155 aa).

This sequence belongs to the RecX family.

The protein resides in the cytoplasm. Functionally, modulates RecA activity. This is Regulatory protein RecX from Vibrio parahaemolyticus serotype O3:K6 (strain RIMD 2210633).